We begin with the raw amino-acid sequence, 270 residues long: Elongation factor Ts (270 aa).

The involved in Mg(2+) ion dislocation from EF-Tu stretch occupies residues 75–78 (TDFV).

It belongs to the EF-Ts family.

The protein localises to the cytoplasm. Its function is as follows. Associates with the EF-Tu.GDP complex and induces the exchange of GDP to GTP. It remains bound to the aminoacyl-tRNA.EF-Tu.GTP complex up to the GTP hydrolysis stage on the ribosome. The sequence is that of Elongation factor Ts from Cutibacterium acnes (strain DSM 16379 / KPA171202) (Propionibacterium acnes).